The sequence spans 1290 residues: 1-phosphatidylinositol 4,5-bisphosphate phosphodiesterase gamma-1 (1290 aa).

Position 2 is an N-acetylalanine (Ala2). Positions 27–142 (RSLEVGTVMT…WIKGLTWLME (116 aa)) constitute a PH 1 domain. Residues 152–187 (QIERWLRKQFYSVDRNREDRISAKDLKNMLSQVNYR) enclose the EF-hand domain. Ca(2+) is bound by residues Asp165, Asn167, Glu169, Arg171, and Asp176. Residues 320–464 (ETMNNPLSHY…LKRKILIKHK (145 aa)) form the PI-PLC X-box domain. Catalysis depends on residues His335 and His380. The PH 2; first part domain occupies 489 to 523 (SIKNGILYLEDPVNHEWYPHYFVLTSSKIYYSEET). Tyr506 is subject to Phosphotyrosine. The interval 522–546 (ETSSDQGNEDEEEPKEASGSTELHS) is disordered. SH2 domains are found at residues 550-657 (WFHG…SEPV) and 668-756 (WYHA…RYPI). A Phosphotyrosine; by SYK modification is found at Tyr771. Position 775 is a phosphotyrosine (Tyr775). The residue at position 783 (Tyr783) is a Phosphotyrosine; by ITK, SYK and TXK. The region spanning 791–851 (TFKCAVKALF…PSNYVEEMIN (61 aa)) is the SH3 domain. A PH 2; second part domain is found at 895–931 (FVFSISMPSVAQWSLDVAADSQEELQDWVKKIREVAQ). Residues 953-1070 (LSELVVYCRP…GYVLQPSTMR (118 aa)) form the PI-PLC Y-box domain. The residue at position 977 (Tyr977) is a Phosphotyrosine. The C2 domain occupies 1071-1194 (DEAFDPFDKS…TGYRAVPLKN (124 aa)). Phosphoserine is present on residues Ser1221, Ser1227, Ser1233, and Ser1248. Residue Tyr1253 is modified to Phosphotyrosine. At Ser1263 the chain carries Phosphoserine. The interval 1271–1290 (FDSRERRAPRRTRVNGDNRL) is disordered.

In terms of assembly, interacts with AGAP2 via its SH3 domain. Interacts (via SH2 domain) with RET. Interacts with FLT1 (tyrosine-phosphorylated). Interacts (via SH2 domain) with FGFR1, FGFR2, FGFR3 and FGFR4 (phosphorylated). Interacts with LAT (phosphorylated) upon TCR activation. Interacts (via SH3 domain) with the Pro-rich domain of TNK1. Associates with BLNK, VAV1, GRB2 and NCK1 in a B-cell antigen receptor-dependent fashion. Interacts with CBLB in activated T-cells; which inhibits phosphorylation. Interacts with SHB. Interacts (via SH3 domain) with the Arg/Gly-rich-flanked Pro-rich domains of KHDRBS1/SAM68. This interaction is selectively regulated by arginine methylation of KHDRBS1/SAM68. Interacts with INPP5D/SHIP1, THEMIS and CLNK. Interacts with AXL, FLT4 and KIT. Interacts with RALGPS1. Interacts (via the SH2 domains) with VIL1 (phosphorylated at C-terminus tyrosine phosphorylation sites). Interacts (via SH2 domain) with PDGFRA and PDGFRB (tyrosine phosphorylated). Interacts with PIP5K1C. Interacts with NTRK1 and NTRK2 (phosphorylated upon ligand-binding). Interacts with SYK; activates PLCG1. Interacts with GRB2, LAT and THEMIS upon TCR activation in thymocytes. Interacts with TESPA1; the association is increased with prolonged stimulation of the TCR and may facilitate the assembly of the LAT signalosome. Interacts (via C-terminal proline-rich domain (PRD)) with PLCG1 (via SH3 domain); this interaction leads to guanine nucleotide exchange from PlCG1 to DNM1 and enhances DNM1-dependent endocytosis. The cofactor is Ca(2+). Ubiquitinated by CBLB in activated T-cells. In terms of processing, tyrosine phosphorylated in response to signaling via activated FLT3, KIT and PDGFRA. Tyrosine phosphorylated by activated FGFR1, FGFR2, FGFR3 and FGFR4. Tyrosine phosphorylated by activated FLT1 and KDR. Tyrosine phosphorylated by activated PDGFRB. The receptor-mediated activation of PLCG1 involves its phosphorylation by tyrosine kinases, in response to ligation of a variety of growth factor receptors and immune system receptors. For instance, SYK phosphorylates and activates PLCG1 in response to ligation of the B-cell receptor. May be dephosphorylated by PTPRJ. Phosphorylated by ITK and TXK on Tyr-783 upon TCR activation in T-cells.

The protein localises to the cell projection. It localises to the lamellipodium. It is found in the ruffle. It catalyses the reaction a 1,2-diacyl-sn-glycero-3-phospho-(1D-myo-inositol-4,5-bisphosphate) + H2O = 1D-myo-inositol 1,4,5-trisphosphate + a 1,2-diacyl-sn-glycerol + H(+). The catalysed reaction is a 1,2-diacyl-sn-glycero-3-phospho-(1D-myo-inositol) + H2O = 1D-myo-inositol 1-phosphate + a 1,2-diacyl-sn-glycerol + H(+). Activated by phosphorylation on tyrosine residues. Its function is as follows. Mediates the production of the second messenger molecules diacylglycerol (DAG) and inositol 1,4,5-trisphosphate (IP3). Plays an important role in the regulation of intracellular signaling cascades. Becomes activated in response to ligand-mediated activation of receptor-type tyrosine kinases, such as PDGFRA, PDGFRB, EGFR, FGFR1, FGFR2, FGFR3 and FGFR4. Plays a role in actin reorganization and cell migration. Guanine nucleotide exchange factor that binds the GTPase DNM1 and catalyzes the dissociation of GDP, allowing a GTP molecule to bind in its place, therefore enhancing DNM1-dependent endocytosis. The protein is 1-phosphatidylinositol 4,5-bisphosphate phosphodiesterase gamma-1 of Rattus norvegicus (Rat).